Reading from the N-terminus, the 333-residue chain is L-lactate dehydrogenase B chain (333 aa).

NAD(+)-binding positions include 29 to 57 (GQVG…WEDK) and Arg-99. Arg-106, Asn-138, and Arg-169 together coordinate substrate. An NAD(+)-binding site is contributed by Asn-138. Catalysis depends on His-193, which acts as the Proton acceptor. Thr-248 provides a ligand contact to substrate.

It belongs to the LDH/MDH superfamily. LDH family. Homotetramer.

The protein localises to the cytoplasm. The catalysed reaction is (S)-lactate + NAD(+) = pyruvate + NADH + H(+). It functions in the pathway fermentation; pyruvate fermentation to lactate; (S)-lactate from pyruvate: step 1/1. Its function is as follows. Interconverts simultaneously and stereospecifically pyruvate and lactate with concomitant interconversion of NADH and NAD(+). This is L-lactate dehydrogenase B chain (LDHB) from Alligator mississippiensis (American alligator).